The following is a 242-amino-acid chain: NAD-dependent protein deacetylase 1 (242 aa).

Positions 1 to 242 (MTITSWLAAS…LNEQLAEVDP (242 aa)) constitute a Deacetylase sirtuin-type domain. Ala19, Thr23, Phe30, Arg31, Gln97, Val99, Asp100, and His115 together coordinate NAD(+). Phe30 serves as a coordination point for nicotinamide. Residues Val99 and Asp100 each coordinate nicotinamide. The active-site Proton acceptor is His115. Zn(2+) contacts are provided by Cys123, Cys126, Cys142, and Cys144. The NAD(+) site is built by Ser182, Ser183, Asn207, and Ile226.

The protein belongs to the sirtuin family. Class U subfamily. The cofactor is Zn(2+).

The protein localises to the cytoplasm. It carries out the reaction N(6)-acetyl-L-lysyl-[protein] + NAD(+) + H2O = 2''-O-acetyl-ADP-D-ribose + nicotinamide + L-lysyl-[protein]. Functionally, NAD-dependent protein deacetylase which modulates the activities of several enzymes which are inactive in their acetylated form. The polypeptide is NAD-dependent protein deacetylase 1 (Geobacillus kaustophilus (strain HTA426)).